Consider the following 345-residue polypeptide: Cysteinyl leukotriene receptor 2 (345 aa).

Over 1-43 (MERKLMSLLPSISLSEMEPNSTLGNHNSNRSCTTENFKREFYP) the chain is Extracellular. 2 N-linked (GlcNAc...) asparagine glycosylation sites follow: N20 and N29. A helical transmembrane segment spans residues 44–64 (IVYLVIFIWGALGNGFSIYVF). Topologically, residues 65 to 73 (LKPYKKSTS) are cytoplasmic. The helical transmembrane segment at 74-94 (VNVFMLNLAISDLLFTITLPF) threads the bilayer. The Extracellular portion of the chain corresponds to 95 to 124 (RVDYYLRGSNXIFGDTPCRIMSYSMYVNMY). C112 and C188 form a disulfide bridge. A helical transmembrane segment spans residues 125 to 145 (SSIYFLTVLSVVRFLATVHPF). At 146-154 (RLLHTTSIK) the chain is on the cytoplasmic side. The helical transmembrane segment at 155–175 (NAWILCGVIWIFIMASSTVLL) threads the bilayer. At 176–205 (KNGSEQKDNVTLCLELNSNKVTKLKTMNYV) the chain is on the extracellular side. N177 and N184 each carry an N-linked (GlcNAc...) asparagine glycan. A helical membrane pass occupies residues 206 to 226 (ALVVGFVLPFGTLSICYLLII). The Cytoplasmic portion of the chain corresponds to 227 to 246 (RALLKVEVPESGLRLSHRKA). A helical membrane pass occupies residues 247-267 (LITVIIALIIFLLCFLPYHVL). Residues 268-287 (RTLHLLEWKADKCKDRLHKA) are Extracellular-facing. The chain crosses the membrane as a helical span at residues 288 to 308 (VAVTLALAAANSCFNPFLYYF). Residues 309–345 (AGENFKDRLKSALRKGRPQKTRCGFSVCVWLKKETRV) are Cytoplasmic-facing.

Belongs to the G-protein coupled receptor 1 family.

It localises to the cell membrane. Its function is as follows. Receptor for cysteinyl leukotrienes. The response is mediated via a G-protein that activates a phosphatidylinositol-calcium second messenger system. The polypeptide is Cysteinyl leukotriene receptor 2 (CYSLTR2) (Sus scrofa (Pig)).